The following is a 216-amino-acid chain: UPF0301 protein Nham_3550 (216 aa).

The segment covering Met1–Thr10 has biased composition (basic residues). Residues Met1–Gln25 are disordered.

The protein belongs to the UPF0301 (AlgH) family.

This is UPF0301 protein Nham_3550 from Nitrobacter hamburgensis (strain DSM 10229 / NCIMB 13809 / X14).